Reading from the N-terminus, the 419-residue chain is Multidrug efflux pump Tap (419 aa).

12 helical membrane passes run 7–29 (GPAF…SIVA), 44–66 (ASIV…GTAV), 73–95 (RVSM…VAWG), 100–122 (AVNV…AGMT), 149–171 (ILNL…VGGI), 175–197 (WITA…EGAG), 218–240 (FVWN…ALYL), 260–282 (LGWA…AVLA), 289–308 (VTMS…IAFL), 313–335 (VIMV…YNYV), 348–370 (VVGV…AGPL), and 375–397 (GLHA…AIRL).

The protein belongs to the major facilitator superfamily. Drug:H(+) antiporter-3 (DHA3) (TC 2.A.1.21) family.

It localises to the cell inner membrane. Inhibited by piperine, verapamil and verapamil analogs. In terms of biological role, efflux pump that contributes to intrinsic antibiotic resistance. The pump uses the electrochemical gradient as a source of energy. Confers resistance to rifampicin. Confers low-level resistance to tetracycline and to several aminoglycosides, including streptomycin, gentamicin, 2'-N-ethylnetilmicin and 6'-N-ethylnetilmicin. The sequence is that of Multidrug efflux pump Tap from Mycobacterium tuberculosis (strain ATCC 25618 / H37Rv).